A 481-amino-acid chain; its full sequence is Arylsulfatase (481 aa).

Ca(2+) is bound by residues Asp11, Gln12, and Cys51. Cys51 (nucleophile) is an active-site residue. Position 51 is a 3-oxoalanine (Cys) (Cys51). Residue His102 is part of the active site. Ca(2+) is bound by residues Asp302 and His303.

Belongs to the sulfatase family. It depends on Ca(2+) as a cofactor. The conversion to 3-oxoalanine (also known as C-formylglycine, FGly), of a serine or cysteine residue in prokaryotes and of a cysteine residue in eukaryotes, is critical for catalytic activity.

It catalyses the reaction an aryl sulfate + H2O = a phenol + sulfate + H(+). Its function is as follows. Has sulfatase activity toward para-nitrophenyl sulfate, which is increased in presence of calcium ion. The protein is Arylsulfatase of Clostridium perfringens (strain 13 / Type A).